The primary structure comprises 242 residues: uncharacterized protein (242 aa).

The 114-residue stretch at 3–116 (TALVIDDEQF…RLNKTVKRLN (114 aa)) folds into the Response regulatory domain. Asp54 is subject to 4-aspartylphosphate. The 102-residue stretch at 139–240 (IPCIGHNRIV…LKVLKEMLGI (102 aa)) folds into the HTH LytTR-type domain.

This is an uncharacterized protein from Vibrio parahaemolyticus serotype O3:K6 (strain RIMD 2210633).